We begin with the raw amino-acid sequence, 468 residues long: Putative magnesium transporter MRS2-G (468 aa).

Disordered stretches follow at residues 1–76 and 183–204; these read MGRR…AGKV and GQPG…QVPR. Low complexity-rich tracts occupy residues 14–23 and 31–45; these read ASNASTSSST and RLPS…SSPS. The segment covering 46 to 67 has biased composition (pro residues); the sequence is PASPSPPPPSASHPAPPSPPLA. The span at 187–201 shows a compositional bias: basic and acidic residues; sequence GDDHGEKHDDSHGDQ. 2 consecutive transmembrane segments (helical) span residues 402-422 and 437-457; these read LTLT…GAFA and FFWP…IVLL.

It belongs to the CorA metal ion transporter (MIT) (TC 1.A.35.5) family. As to quaternary structure, interacts with CYCB2-2.

The protein resides in the membrane. Its function is as follows. Putative magnesium transporter. This is Putative magnesium transporter MRS2-G (MRS2-G) from Oryza sativa subsp. japonica (Rice).